The sequence spans 173 residues: Adenine phosphoribosyltransferase (173 aa).

This sequence belongs to the purine/pyrimidine phosphoribosyltransferase family. Homodimer.

Its subcellular location is the cytoplasm. The catalysed reaction is AMP + diphosphate = 5-phospho-alpha-D-ribose 1-diphosphate + adenine. The protein operates within purine metabolism; AMP biosynthesis via salvage pathway; AMP from adenine: step 1/1. Catalyzes a salvage reaction resulting in the formation of AMP, that is energically less costly than de novo synthesis. In Ureaplasma parvum serovar 3 (strain ATCC 27815 / 27 / NCTC 11736), this protein is Adenine phosphoribosyltransferase.